Reading from the N-terminus, the 83-residue chain is MAITKKILLPFVLTILFVISSVHCSDDTQGFGIKQEYKQCYTPDPCRKGGNDECERFCVAKSGLLYGKCINDGSKDVCCCLTK.

The signal sequence occupies residues 1–24 (MAITKKILLPFVLTILFVISSVHC). Disulfide bonds link Cys40-Cys80, Cys46-Cys69, Cys54-Cys78, and Cys58-Cys79.

Belongs to the DEFL family.

It is found in the secreted. The polypeptide is Putative defensin-like protein 111 (LCR50) (Arabidopsis thaliana (Mouse-ear cress)).